Reading from the N-terminus, the 622-residue chain is 1,4-alpha-glucan branching enzyme GlgB (622 aa).

The Nucleophile role is filled by Asp300. Residue Glu351 is the Proton donor of the active site.

The protein belongs to the glycosyl hydrolase 13 family. GlgB subfamily. As to quaternary structure, monomer.

The enzyme catalyses Transfers a segment of a (1-&gt;4)-alpha-D-glucan chain to a primary hydroxy group in a similar glucan chain.. The protein operates within glycan biosynthesis; glycogen biosynthesis. In terms of biological role, catalyzes the formation of the alpha-1,6-glucosidic linkages in glycogen by scission of a 1,4-alpha-linked oligosaccharide from growing alpha-1,4-glucan chains and the subsequent attachment of the oligosaccharide to the alpha-1,6 position. The chain is 1,4-alpha-glucan branching enzyme GlgB from Streptococcus agalactiae serotype V (strain ATCC BAA-611 / 2603 V/R).